A 297-amino-acid chain; its full sequence is 4-hydroxy-tetrahydrodipicolinate synthase (297 aa).

Pyruvate is bound at residue Thr50. The active-site Proton donor/acceptor is Tyr138. Lys166 serves as the catalytic Schiff-base intermediate with substrate. Ile208 is a pyruvate binding site.

Belongs to the DapA family. In terms of assembly, homotetramer; dimer of dimers.

It is found in the cytoplasm. The enzyme catalyses L-aspartate 4-semialdehyde + pyruvate = (2S,4S)-4-hydroxy-2,3,4,5-tetrahydrodipicolinate + H2O + H(+). Its pathway is amino-acid biosynthesis; L-lysine biosynthesis via DAP pathway; (S)-tetrahydrodipicolinate from L-aspartate: step 3/4. Its function is as follows. Catalyzes the condensation of (S)-aspartate-beta-semialdehyde [(S)-ASA] and pyruvate to 4-hydroxy-tetrahydrodipicolinate (HTPA). The protein is 4-hydroxy-tetrahydrodipicolinate synthase of Haemophilus ducreyi (strain 35000HP / ATCC 700724).